We begin with the raw amino-acid sequence, 557 residues long: Glypican-4 (557 aa).

A signal peptide spans 1–18 (MARLGLLALLCTLAALSA). Ser357 is subject to Phosphoserine. Residues Ser494, Ser498, and Ser500 are each glycosylated (O-linked (Xyl...) (glycosaminoglycan) serine). An N-linked (GlcNAc...) asparagine glycan is attached at Asn514. Ser529 carries GPI-anchor amidated serine lipidation. The propeptide at 530–557 (AGGAHAEAKPYLLAALCILFLAVQGEWR) is removed in mature form.

It belongs to the glypican family. As to expression, highly expressed in developing brain and kidney.

It is found in the cell membrane. The protein localises to the secreted. Its subcellular location is the extracellular space. Functionally, cell surface proteoglycan that bears heparan sulfate. May be involved in the development of kidney tubules and of the central nervous system. The polypeptide is Glypican-4 (Gpc4) (Mus musculus (Mouse)).